The chain runs to 55 residues: uncharacterized protein (55 aa).

This is an uncharacterized protein from Escherichia coli (strain K12).